We begin with the raw amino-acid sequence, 1612 residues long: DNA (cytosine-5)-methyltransferase PliMCI (1612 aa).

The 95-residue stretch at Cys-7–Ser-101 folds into the DMAP1-binding domain. Residues Thr-87–Arg-338 are disordered. Basic and acidic residues predominate over residues Asp-94–Glu-110. Residues Asn-115–Ser-131 show a composition bias toward low complexity. Residues Lys-132–Val-142 show a composition bias toward polar residues. Over residues Gln-143–Gln-154 the composition is skewed to low complexity. 3 stretches are compositionally biased toward basic and acidic residues: residues Val-193–Val-212, Glu-222–Leu-232, and Lys-260–Glu-289. The segment at Ala-626–Pro-672 adopts a CXXC-type zinc-finger fold. Zn(2+) contacts are provided by Cys-633, Cys-636, Cys-639, Cys-644, Cys-647, Cys-650, Cys-666, and Cys-671. Residues Gln-677 to Glu-708 are disordered. A compositionally biased stretch (acidic residues) spans Glu-678–Asp-688. A compositionally biased stretch (basic and acidic residues) spans Ser-691–Glu-708. 2 consecutive BAH domains span residues Glu-743–Glu-871 and Asn-967–Pro-1089. Residues Cys-1084 to Lys-1121 form a disordered region. Over residues Arg-1093 to Gly-1111 the composition is skewed to basic residues. The SAM-dependent MTase C5-type domain occupies Leu-1131–Lys-1590. Residues Gly-1142–Leu-1143, Glu-1160–Lys-1161, Asp-1182–Cys-1183, and Cys-1183 each bind S-adenosyl-L-methionine. The active site involves Cys-1218. S-adenosyl-L-methionine is bound by residues Asn-1569 and Val-1571.

Belongs to the class I-like SAM-binding methyltransferase superfamily. C5-methyltransferase family.

It localises to the nucleus. It catalyses the reaction a 2'-deoxycytidine in DNA + S-adenosyl-L-methionine = a 5-methyl-2'-deoxycytidine in DNA + S-adenosyl-L-homocysteine + H(+). Its function is as follows. Methylates CpG residues. This Paracentrotus lividus (Common sea urchin) protein is DNA (cytosine-5)-methyltransferase PliMCI (DNMT).